We begin with the raw amino-acid sequence, 43 residues long: Bacteriocin mundticin (43 aa).

Cys9 and Cys14 are disulfide-bonded.

This bacteriocin inhibits the growth of several Gram-positive bacteria, especially pathogenic L.monocytogenes and C.botulinum but has no effect on the growth of a number of yeasts and Gram-negative bacteria. In Enterococcus mundtii, this protein is Bacteriocin mundticin.